Consider the following 335-residue polypeptide: Nucleoid-associated protein YejK (335 aa).

This sequence belongs to the YejK family.

It is found in the cytoplasm. It localises to the nucleoid. The protein is Nucleoid-associated protein YejK of Shigella flexneri.